Here is an 83-residue protein sequence, read N- to C-terminus: Three-finger toxin MALT0052C (83 aa).

Positions 1–21 are cleaved as a signal peptide; the sequence is MKTLLLTLVVVTIVCLDFGHT. Disulfide bonds link Cys24–Cys45, Cys38–Cys62, Cys64–Cys75, and Cys76–Cys81.

The protein belongs to the three-finger toxin family. Short-chain subfamily. Type I alpha-neurotoxin sub-subfamily. In terms of tissue distribution, expressed by the venom gland.

The protein resides in the secreted. In terms of biological role, binds to muscle nicotinic acetylcholine receptor (nAChR) and inhibit acetylcholine from binding to the receptor, thereby impairing neuromuscular transmission. The protein is Three-finger toxin MALT0052C of Micrurus altirostris (Uruguayan coral snake).